Here is a 51-residue protein sequence, read N- to C-terminus: UPF0391 membrane protein PsycPRwf_2202 (51 aa).

A run of 2 helical transmembrane segments spans residues 6 to 26 (IIFAVIALLASLLGFGGVAGL) and 27 to 47 (SQNFAYIFLVVAVILFIIGFI).

This sequence belongs to the UPF0391 family.

It localises to the cell membrane. The protein is UPF0391 membrane protein PsycPRwf_2202 of Psychrobacter sp. (strain PRwf-1).